A 104-amino-acid chain; its full sequence is ATP-dependent Clp protease adapter protein ClpS (104 aa).

The protein belongs to the ClpS family. As to quaternary structure, binds to the N-terminal domain of the chaperone ClpA.

In terms of biological role, involved in the modulation of the specificity of the ClpAP-mediated ATP-dependent protein degradation. This is ATP-dependent Clp protease adapter protein ClpS from Nitratidesulfovibrio vulgaris (strain ATCC 29579 / DSM 644 / CCUG 34227 / NCIMB 8303 / VKM B-1760 / Hildenborough) (Desulfovibrio vulgaris).